The sequence spans 187 residues: Threonylcarbamoyl-AMP synthase (187 aa).

The 184-residue stretch at 4-187 folds into the YrdC-like domain; the sequence is TLDLDRAVAT…DARSGQILRD (184 aa).

The protein belongs to the SUA5 family. TsaC subfamily.

It localises to the cytoplasm. It carries out the reaction L-threonine + hydrogencarbonate + ATP = L-threonylcarbamoyladenylate + diphosphate + H2O. Functionally, required for the formation of a threonylcarbamoyl group on adenosine at position 37 (t(6)A37) in tRNAs that read codons beginning with adenine. Catalyzes the conversion of L-threonine, HCO(3)(-)/CO(2) and ATP to give threonylcarbamoyl-AMP (TC-AMP) as the acyladenylate intermediate, with the release of diphosphate. This is Threonylcarbamoyl-AMP synthase from Xanthomonas euvesicatoria pv. vesicatoria (strain 85-10) (Xanthomonas campestris pv. vesicatoria).